A 185-amino-acid chain; its full sequence is Photosystem I assembly protein Ycf4 (185 aa).

The next 2 helical transmembrane spans lie at 20–40 and 57–77; these read GNFFWACILFLGSLGFLSVGA and ILFFPQGVVMSFYGIAGLFIS.

This sequence belongs to the Ycf4 family.

The protein resides in the plastid. It localises to the chloroplast thylakoid membrane. In terms of biological role, seems to be required for the assembly of the photosystem I complex. This chain is Photosystem I assembly protein Ycf4, found in Agrostis stolonifera (Creeping bentgrass).